Reading from the N-terminus, the 249-residue chain is Demethylmenaquinone methyltransferase (249 aa).

Residues threonine 67, aspartate 87, and 115–116 (DA) contribute to the S-adenosyl-L-methionine site.

Belongs to the class I-like SAM-binding methyltransferase superfamily. MenG/UbiE family.

It carries out the reaction a 2-demethylmenaquinol + S-adenosyl-L-methionine = a menaquinol + S-adenosyl-L-homocysteine + H(+). It functions in the pathway quinol/quinone metabolism; menaquinone biosynthesis; menaquinol from 1,4-dihydroxy-2-naphthoate: step 2/2. In terms of biological role, methyltransferase required for the conversion of demethylmenaquinol (DMKH2) to menaquinol (MKH2). The sequence is that of Demethylmenaquinone methyltransferase from Leptospira interrogans serogroup Icterohaemorrhagiae serovar copenhageni (strain Fiocruz L1-130).